The primary structure comprises 110 residues: Large ribosomal subunit protein uL22 (110 aa).

This sequence belongs to the universal ribosomal protein uL22 family. Part of the 50S ribosomal subunit.

Functionally, this protein binds specifically to 23S rRNA; its binding is stimulated by other ribosomal proteins, e.g. L4, L17, and L20. It is important during the early stages of 50S assembly. It makes multiple contacts with different domains of the 23S rRNA in the assembled 50S subunit and ribosome. In terms of biological role, the globular domain of the protein is located near the polypeptide exit tunnel on the outside of the subunit, while an extended beta-hairpin is found that lines the wall of the exit tunnel in the center of the 70S ribosome. In Hahella chejuensis (strain KCTC 2396), this protein is Large ribosomal subunit protein uL22.